A 400-amino-acid chain; its full sequence is Integumentary mucin A.1 (400 aa).

The N-terminal stretch at 1–20 (MKHIILCIHFLLMVVGLGQA) is a signal peptide. 2 consecutive P-type domains span residues 21-64 (QDCS…FYNA) and 72-115 (LECS…YART). 3 disulfides stabilise this stretch: C23–C49, C33–C48, and C43–C60. An N-linked (GlcNAc...) asparagine glycan is attached at N63. Intrachain disulfides connect C74/C100, C84/C99, and C94/C111. 2 stretches are compositionally biased toward low complexity: residues 122–264 (PDTT…DTTP) and 272–299 (ETTTETTTETTTETTTETTTETTTETTT). Residues 122 to 302 (PDTTTASTTA…TTTETTTAPP (181 aa)) are disordered. 14 tandem repeats follow at residues 127-135 (ASTTAETTT), 136-144 (VPTTPETTT), 145-153 (VPTTPETTT), 154-162 (VPTTPETTT), 163-171 (VPTTPETTT), 172-180 (VPTTPETTT), 181-189 (VPTTPETTT), 190-198 (VPTTPETTT), 199-207 (VPTTPETTT), 208-216 (VPTTPETTT), 217-225 (VPTTPETTT), 226-234 (VPTTPETTT), 235-243 (ASTTAETTT), and 244-252 (VPTTPETTT). Residues 127–261 (ASTTAETTTV…TEPTTTPTTD (135 aa)) are 15 X 9 AA approximate tandem repeats of [AV]-[SP]-T-T-[AP]-E-T-T-T. One copy of the 1-15; approximate repeat lies at 253 to 261 (EPTTTPTTD). A run of 7 repeats spans residues 272–275 (ETTT), 276–279 (ETTT), 280–283 (ETTT), 284–287 (ETTT), 288–291 (ETTT), 292–295 (ETTT), and 296–299 (ETTT). Residues 272 to 299 (ETTTETTTETTTETTTETTTETTTETTT) are 7 X 4 AA repeats of E-T-T-T. P-type domains follow at residues 298 to 343 (TTAP…FYTE) and 351 to 394 (AECT…FEKA). 5 cysteine pairs are disulfide-bonded: C312–C327, C322–C339, C353–C379, C363–C378, and C373–C390.

In terms of processing, extensively O-glycosylated. Consist of about 70% carbohydrate and 30% protein. As to expression, expressed and stored exclusively in mature mucous glands of the skin.

It localises to the secreted. In terms of biological role, could be involved in defense against microbial infections. Protects the epithelia from external environment. The chain is Integumentary mucin A.1 from Xenopus laevis (African clawed frog).